The primary structure comprises 549 residues: DNA polymerase lambda (549 aa).

The BRCT domain maps to 17–116; that stretch reads DPDGMFRGVS…ERLPEHKFAI (100 aa). The segment at 126-197 is disordered; the sequence is KEGGAAGSGV…ASGDSKETIA (72 aa). Over residues 149–175 the composition is skewed to basic and acidic residues; it reads PENRKETAGGNRESRDAIAHPNEDSDV. Positions 180 to 197 are enriched in polar residues; sequence STCTSSQSASGDSKETIA. The interval 233 to 247 is DNA-binding; it reads NIYRALGDDRRSFSY. Residue His-280 is part of the active site. The tract at residues 315 to 318 is DNA-binding; the sequence is GPAT. DCTP-binding positions include Arg-356, 387–390, and 396–399; these read SYRR and GDMD. The involved in primer binding stretch occupies residues 390–399; that stretch reads RGKSSCGDMD. Mn(2+) is bound by residues Asp-397, Asp-399, and Asp-464. Residues 438-479 are DNA-binding; it reads IEGTDCGVDTYFGLCTYPGRELRHRIDLKVYPRNRHAFGLLA. Position 487 (Asn-487) interacts with dCTP.

It belongs to the DNA polymerase type-X family. Interacts with PCNA. Requires Mn(2+) as cofactor. In terms of tissue distribution, expressed in proliferating tissues. Expressed in roots, root apex, young leaves, shoot apical meristem (SAM), flag leaves and panicles.

Its subcellular location is the nucleus. The enzyme catalyses DNA(n) + a 2'-deoxyribonucleoside 5'-triphosphate = DNA(n+1) + diphosphate. Functionally, repair polymerase involved in base excision repair (BER) and responsible for repair of lesions that give rise to abasic (AP) sites in DNA. Has both DNA polymerase and terminal transferase activities. Has a 5'-deoxyribose-5-phosphate lyase (dRP lyase) activity. The chain is DNA polymerase lambda from Oryza sativa subsp. japonica (Rice).